The primary structure comprises 209 residues: MSKIKLFDLSGKVQEEIELNQKLLVSEVHKQAIFDAILAENLSQIQGTHSTLKKGEVSGGGKKPYQQKHTGRARQGSIRNPHYVGGGIAFGPKPNRNYKIKVNKKVSSLAFKSAITSKVNNNEFLGLVDSIKQDKPSTKAIAKLLKELKVNKKVLIVAFEKNENLEKSSANLPNVSYKLWNQVSVKDLIDANCVLAQKSAINNWVERLN.

The tract at residues 50–78 (STLKKGEVSGGGKKPYQQKHTGRARQGSI) is disordered.

The protein belongs to the universal ribosomal protein uL4 family. Part of the 50S ribosomal subunit.

One of the primary rRNA binding proteins, this protein initially binds near the 5'-end of the 23S rRNA. It is important during the early stages of 50S assembly. It makes multiple contacts with different domains of the 23S rRNA in the assembled 50S subunit and ribosome. Its function is as follows. Forms part of the polypeptide exit tunnel. This is Large ribosomal subunit protein uL4 from Mycoplasmoides gallisepticum (strain R(low / passage 15 / clone 2)) (Mycoplasma gallisepticum).